The following is a 60-amino-acid chain: Large ribosomal subunit protein bL32 (60 aa).

The disordered stretch occupies residues 1-43 (MAVQQNRKTRSRRGMRRSHDALTGKTLSVDSTTGEKHLRHHVT). Residues 7 to 16 (RKTRSRRGMR) show a composition bias toward basic residues.

It belongs to the bacterial ribosomal protein bL32 family.

The chain is Large ribosomal subunit protein bL32 from Saccharophagus degradans (strain 2-40 / ATCC 43961 / DSM 17024).